A 197-amino-acid polypeptide reads, in one-letter code: Small ribosomal subunit protein eS1 (197 aa).

This sequence belongs to the eukaryotic ribosomal protein eS1 family.

This chain is Small ribosomal subunit protein eS1, found in Sulfolobus acidocaldarius (strain ATCC 33909 / DSM 639 / JCM 8929 / NBRC 15157 / NCIMB 11770).